The chain runs to 102 residues: Putative pterin-4-alpha-carbinolamine dehydratase (102 aa).

Belongs to the pterin-4-alpha-carbinolamine dehydratase family.

The enzyme catalyses (4aS,6R)-4a-hydroxy-L-erythro-5,6,7,8-tetrahydrobiopterin = (6R)-L-erythro-6,7-dihydrobiopterin + H2O. The protein is Putative pterin-4-alpha-carbinolamine dehydratase of Burkholderia multivorans (strain ATCC 17616 / 249).